The following is a 278-amino-acid chain: Complement component 1 Q subcomponent-binding protein, mitochondrial (278 aa).

The N-terminal 70 residues, 1–70 (MLPLLRCVPR…PVPCACGCGA (70 aa)), are a transit peptide targeting the mitochondrion. Residues 73–90 (TEGDKAFVEFLTDEIKEE) form a C1q binding region. Residues lysine 88 and lysine 91 each carry the N6-acetyllysine modification. The segment at 133–162 (NNSIPPTFDGEEEPSQGQKAEEQEPERTST) is disordered. Residues 165–209 (FVVEVTKTDGKKTLVLDCHYPEDEIGHEDEAESDIFSIKEVSFQA) form an interaction with MAVS region. Tyrosine 184 carries the post-translational modification Phosphotyrosine. A phosphoserine mark is found at serine 197 and serine 201. Position 210 is a phosphothreonine (threonine 210).

It belongs to the MAM33 family. As to quaternary structure, homotrimer; three monomers form a donut-shaped structure with an unusually asymmetric charge distribution on the surface. Interacts with CDK13, HRK, VTN, NFYB, ADRA1B, FOXC1, DDX21, DDX50, NCL, SRSF1 and SRSF9. Interacts with CD93; the association may represent a cell surface C1q receptor. Interacts with KRT1; the association represents a cell surface kininogen receptor. Interacts with CD209; the interaction is indicative for a C1q:C1QBP:CD209 signaling complex. Interacts with FBL and RRP1; the respective interactions with C1QBP are competitive. Probably associates with the mitoribosome. Interacts with MAVS; the interaction occurs upon viral transfection. Interacts with PPIF. Interacts with U2AF1L4. Interacts with PLEKHN1. Interacts with VGF-derived peptide TLQP-21. Interacts with MRE11 and RAD50; forming the MRC (MRE11-RAD50-C1QBP) complex that inhibits the activity of MRE11. As to expression, ubiquitous.

It localises to the mitochondrion matrix. The protein resides in the nucleus. It is found in the cell membrane. The protein localises to the secreted. Its subcellular location is the cytoplasm. It localises to the nucleolus. In terms of biological role, is believed to be a multifunctional and multicompartmental protein involved in inflammation and infection processes, ribosome biogenesis, protein synthesis in mitochondria, regulation of apoptosis, transcriptional regulation and pre-mRNA splicing. At the cell surface is thought to act as an endothelial receptor for plasma proteins of the complement and kallikrein-kinin cascades. Putative receptor for C1q; specifically binds to the globular 'heads' of C1q thus inhibiting C1; may perform the receptor function through a complex with C1qR/CD93. In complex with cytokeratin-1/KRT1 is a high affinity receptor for kininogen-1/HMWK. Can also bind other plasma proteins, such as coagulation factor XII leading to its autoactivation. May function to bind initially fluid kininogen-1 to the cell membrane. The secreted form may enhance both extrinsic and intrinsic coagulation pathways. It is postulated that the cell surface form requires docking with transmembrane proteins for downstream signaling which might be specific for a cell-type or response. By acting as C1q receptor is involved in chemotaxis of immature dendritic cells and neutrophils and is proposed to signal through CD209/DC-SIGN on immature dendritic cells, through integrin alpha-4/beta-1 during trophoblast invasion of the decidua, and through integrin beta-1 during endothelial cell adhesion and spreading. Signaling involved in inhibition of innate immune response is implicating the PI3K-AKT/PKB pathway. Required for protein synthesis in mitochondria. In mitochondrial translation may be involved in formation of functional 55S mitoribosomes; the function seems to involve its RNA-binding activity. Acts as a RNA modification reader, which specifically recognizes and binds mitochondrial RNAs modified by C5-methylcytosine (m5C) in response to stress, and promotes recruitment of the mitochondrial degradosome complex, leading to their degradation. May be involved in the nucleolar ribosome maturation process; the function may involve the exchange of FBL for RRP1 in the association with pre-ribosome particles. Involved in regulation of RNA splicing by inhibiting the RNA-binding capacity of SRSF1 and its phosphorylation. Is required for the nuclear translocation of splicing factor U2AF1L4. Involved in regulation of CDKN2A- and HRK-mediated apoptosis. May be involved in regulation of FOXC1 transcriptional activity and NFY/CCAAT-binding factor complex-mediated transcription. May play a role in antibacterial defense. Acts as a regulator of DNA repair via homologous recombination by inhibiting the activity of MRE11: interacts with unphosphorylated MRE11 and RAD50 in absence of DNA damage, preventing formation and activity of the MRN complex. Following DNA damage, dissociates from phosphorylated MRE11, allowing formation of the MRN complex. This Mus musculus (Mouse) protein is Complement component 1 Q subcomponent-binding protein, mitochondrial (C1qbp).